The following is a 293-amino-acid chain: Elongation factor Ts (293 aa).

The interval 80-83 is involved in Mg(2+) ion dislocation from EF-Tu; sequence TDFV.

The protein belongs to the EF-Ts family.

It localises to the cytoplasm. Functionally, associates with the EF-Tu.GDP complex and induces the exchange of GDP to GTP. It remains bound to the aminoacyl-tRNA.EF-Tu.GTP complex up to the GTP hydrolysis stage on the ribosome. This is Elongation factor Ts from Janthinobacterium sp. (strain Marseille) (Minibacterium massiliensis).